The sequence spans 557 residues: Prosaposin (557 aa).

The N-terminal stretch at 1-16 (MYALALFASLLATALT) is a signal peptide. Positions 17–59 (SPVQDPKTCSGGSAVLCRDVKTAVDCGAVKHCQQMVWSKPTAK) are excised as a propeptide. In terms of domain architecture, Saposin A-type 1 spans 18-58 (PVQDPKTCSGGSAVLCRDVKTAVDCGAVKHCQQMVWSKPTA). 4 consecutive Saposin B-type domains span residues 59–142 (KSLP…QSLQ), 193–277 (NEDV…NEVK), 313–394 (NVIL…AARP), and 438–519 (NGGF…PSAY). Cystine bridges form between cysteine 63/cysteine 138, cysteine 66/cysteine 132, and cysteine 94/cysteine 106. Asparagine 80 carries N-linked (GlcNAc...) asparagine glycosylation. The propeptide occupies 143 to 193 (EYLAEQNQKQLESNKIPEVDMARVVAPFMSNIPLLLYPQDHPRSQPQPKAN). 3 cysteine pairs are disulfide-bonded: cysteine 197–cysteine 273, cysteine 200–cysteine 267, and cysteine 229–cysteine 240. Residue asparagine 214 is glycosylated (N-linked (GlcNAc...) asparagine). A propeptide spanning residues 277-312 (KRVPMKTLVPATETIKNILPALEMMDPYEQNLVQAH) is cleaved from the precursor. Disulfide bonds link cysteine 317–cysteine 390, cysteine 320–cysteine 384, and cysteine 348–cysteine 359. A glycan (N-linked (GlcNAc...) asparagine) is linked at asparagine 334. The propeptide occupies 393 to 437 (RPELVEALEQPAPAIVSALLKEPTPPKQPAQPKQSALPAHVPPQK). 3 cysteine pairs are disulfide-bonded: cysteine 442-cysteine 515, cysteine 445-cysteine 509, and cysteine 473-cysteine 484. Asparagine 459 carries N-linked (GlcNAc...) asparagine glycosylation. Residues 520–557 (KLLLGTEKCVWGPSYWCQNMETAARCNAVDHCKRHVWN) constitute a propeptide that is removed on maturation. The Saposin A-type 2 domain maps to 521-557 (LLLGTEKCVWGPSYWCQNMETAARCNAVDHCKRHVWN).

In terms of assembly, saposin-B is a homodimer. Prosaposin exists as a roughly half-half mixture of monomers and disulfide-linked dimers. Monomeric prosaposin interacts (via C-terminus) with sortilin/SORT1, the interaction is required for targeting to lysosomes. Interacts with GRN; facilitates lysosomal delivery of progranulin from the extracellular space and the biosynthetic pathway.

It is found in the secreted. It localises to the lysosome. Its function is as follows. Behaves as a myelinotrophic and neurotrophic factor, these effects are mediated by its G-protein-coupled receptors, GPR37 and GPR37L1, undergoing ligand-mediated internalization followed by ERK phosphorylation signaling. Functionally, saposin-A and saposin-C stimulate the hydrolysis of glucosylceramide by beta-glucosylceramidase (EC 3.2.1.45) and galactosylceramide by beta-galactosylceramidase (EC 3.2.1.46). Saposin-C apparently acts by combining with the enzyme and acidic lipid to form an activated complex, rather than by solubilizing the substrate. Saposin-B stimulates the hydrolysis of galacto-cerebroside sulfate by arylsulfatase A (EC 3.1.6.8), GM1 gangliosides by beta-galactosidase (EC 3.2.1.23) and globotriaosylceramide by alpha-galactosidase A (EC 3.2.1.22). Saposin-B forms a solubilizing complex with the substrates of the sphingolipid hydrolases. In terms of biological role, saposin-D is a specific sphingomyelin phosphodiesterase activator (EC 3.1.4.12). Its function is as follows. Saposins are specific low-molecular mass non-enzymatic proteins, they participate in the lysosomal degradation of sphingolipids, which takes place by the sequential action of specific hydrolases. The polypeptide is Prosaposin (Psap) (Mus musculus (Mouse)).